The sequence spans 251 residues: 3-dehydroquinate dehydratase (251 aa).

Residues 47-49 (EWR) and Arg83 each bind 3-dehydroquinate. Residue His144 is the Proton donor/acceptor of the active site. The Schiff-base intermediate with substrate role is filled by Lys171. 3-dehydroquinate is bound by residues Arg214, Ser233, and Gln237.

It belongs to the type-I 3-dehydroquinase family. Homodimer.

It carries out the reaction 3-dehydroquinate = 3-dehydroshikimate + H2O. Its pathway is metabolic intermediate biosynthesis; chorismate biosynthesis; chorismate from D-erythrose 4-phosphate and phosphoenolpyruvate: step 3/7. Involved in the third step of the chorismate pathway, which leads to the biosynthesis of aromatic amino acids. Catalyzes the cis-dehydration of 3-dehydroquinate (DHQ) and introduces the first double bond of the aromatic ring to yield 3-dehydroshikimate. The chain is 3-dehydroquinate dehydratase from Klebsiella pneumoniae subsp. pneumoniae (strain ATCC 700721 / MGH 78578).